Here is a 138-residue protein sequence, read N- to C-terminus: uncharacterized protein (138 aa).

Residue serine 110 is modified to Phosphoserine.

It is found in the cytoplasm. The protein resides in the nucleus. This is an uncharacterized protein from Schizosaccharomyces pombe (strain 972 / ATCC 24843) (Fission yeast).